Consider the following 292-residue polypeptide: Histamine N-methyltransferase (292 aa).

Glu-28 contributes to the substrate binding site. S-adenosyl-L-methionine-binding residues include Gly-60, Glu-89, Gln-94, Ser-120, and Ile-142. Asn-283 provides a ligand contact to substrate.

This sequence belongs to the class I-like SAM-binding methyltransferase superfamily. HNMT family. As to quaternary structure, monomer.

The protein resides in the cytoplasm. The catalysed reaction is histamine + S-adenosyl-L-methionine = N(tau)-methylhistamine + S-adenosyl-L-homocysteine + H(+). Its function is as follows. Inactivates histamine by N-methylation. Plays an important role in degrading histamine and in regulating the airway response to histamine. This Homo sapiens (Human) protein is Histamine N-methyltransferase (HNMT).